The primary structure comprises 367 residues: Peptide chain release factor 2 (367 aa).

N5-methylglutamine is present on glutamine 247.

It belongs to the prokaryotic/mitochondrial release factor family. Methylated by PrmC. Methylation increases the termination efficiency of RF2.

Its subcellular location is the cytoplasm. Its function is as follows. Peptide chain release factor 2 directs the termination of translation in response to the peptide chain termination codons UGA and UAA. The sequence is that of Peptide chain release factor 2 from Caulobacter sp. (strain K31).